We begin with the raw amino-acid sequence, 478 residues long: 3-isopropylmalate dehydratase large subunit (478 aa).

The [4Fe-4S] cluster site is built by Cys-359, Cys-417, and Cys-420.

Belongs to the aconitase/IPM isomerase family. LeuC type 1 subfamily. Heterodimer of LeuC and LeuD. It depends on [4Fe-4S] cluster as a cofactor.

The catalysed reaction is (2R,3S)-3-isopropylmalate = (2S)-2-isopropylmalate. It functions in the pathway amino-acid biosynthesis; L-leucine biosynthesis; L-leucine from 3-methyl-2-oxobutanoate: step 2/4. Functionally, catalyzes the isomerization between 2-isopropylmalate and 3-isopropylmalate, via the formation of 2-isopropylmaleate. This is 3-isopropylmalate dehydratase large subunit from Anaeromyxobacter sp. (strain Fw109-5).